A 101-amino-acid polypeptide reads, in one-letter code: Small ribosomal subunit protein uS17 (101 aa).

This sequence belongs to the universal ribosomal protein uS17 family. In terms of assembly, part of the 30S ribosomal subunit.

One of the primary rRNA binding proteins, it binds specifically to the 5'-end of 16S ribosomal RNA. The chain is Small ribosomal subunit protein uS17 from Kosmotoga olearia (strain ATCC BAA-1733 / DSM 21960 / TBF 19.5.1).